A 213-amino-acid chain; its full sequence is LexA repressor (213 aa).

A DNA-binding region (H-T-H motif) is located at residues 29–49 (VREICNAVGFKSTSTVHSYLE). Residues S136 and K173 each act as for autocatalytic cleavage activity in the active site.

The protein belongs to the peptidase S24 family. In terms of assembly, homodimer.

It carries out the reaction Hydrolysis of Ala-|-Gly bond in repressor LexA.. Its function is as follows. Represses a number of genes involved in the response to DNA damage (SOS response), including recA and lexA. In the presence of single-stranded DNA, RecA interacts with LexA causing an autocatalytic cleavage which disrupts the DNA-binding part of LexA, leading to derepression of the SOS regulon and eventually DNA repair. The polypeptide is LexA repressor (Acetivibrio thermocellus (strain ATCC 27405 / DSM 1237 / JCM 9322 / NBRC 103400 / NCIMB 10682 / NRRL B-4536 / VPI 7372) (Clostridium thermocellum)).